A 196-amino-acid polypeptide reads, in one-letter code: ATP-dependent Clp protease proteolytic subunit 1 (196 aa).

The active-site Nucleophile is serine 96. Residue histidine 121 is part of the active site.

This sequence belongs to the peptidase S14 family. In terms of assembly, fourteen ClpP subunits assemble into 2 heptameric rings which stack back to back to give a disk-like structure with a central cavity, resembling the structure of eukaryotic proteasomes.

The protein localises to the cytoplasm. The enzyme catalyses Hydrolysis of proteins to small peptides in the presence of ATP and magnesium. alpha-casein is the usual test substrate. In the absence of ATP, only oligopeptides shorter than five residues are hydrolyzed (such as succinyl-Leu-Tyr-|-NHMec, and Leu-Tyr-Leu-|-Tyr-Trp, in which cleavage of the -Tyr-|-Leu- and -Tyr-|-Trp bonds also occurs).. Cleaves peptides in various proteins in a process that requires ATP hydrolysis. Has a chymotrypsin-like activity. Plays a major role in the degradation of misfolded proteins. This chain is ATP-dependent Clp protease proteolytic subunit 1, found in Prochlorococcus marinus (strain SARG / CCMP1375 / SS120).